The sequence spans 178 residues: Gamma-crystallin S (178 aa).

Serine 2 is modified (N-acetylserine). The interval 2 to 5 (SKTG) is N-terminal arm. 2 Beta/gamma crystallin 'Greek key' domains span residues 6–44 (TKITFYEDKNFQGRRYDCDCDCADFHTYLSRCNSIKVEG) and 45–87 (GTWA…RAVH). Positions 88–93 (LPSGGQ) are connecting peptide. 2 consecutive Beta/gamma crystallin 'Greek key' domains span residues 94 to 134 (YKIQ…KVLE) and 135 to 177 (GVWI…RRIV).

Belongs to the beta/gamma-crystallin family. Monomer.

Its function is as follows. Crystallins are the dominant structural components of the vertebrate eye lens. The polypeptide is Gamma-crystallin S (CRYGS) (Homo sapiens (Human)).